We begin with the raw amino-acid sequence, 337 residues long: tRNA N6-adenosine threonylcarbamoyltransferase (337 aa).

Fe cation is bound by residues histidine 111 and histidine 115. Substrate contacts are provided by residues leucine 134 to glycine 138, aspartate 167, glycine 180, and asparagine 272. Aspartate 300 is a Fe cation binding site.

This sequence belongs to the KAE1 / TsaD family. Fe(2+) is required as a cofactor.

It localises to the cytoplasm. The catalysed reaction is L-threonylcarbamoyladenylate + adenosine(37) in tRNA = N(6)-L-threonylcarbamoyladenosine(37) in tRNA + AMP + H(+). Required for the formation of a threonylcarbamoyl group on adenosine at position 37 (t(6)A37) in tRNAs that read codons beginning with adenine. Is involved in the transfer of the threonylcarbamoyl moiety of threonylcarbamoyl-AMP (TC-AMP) to the N6 group of A37, together with TsaE and TsaB. TsaD likely plays a direct catalytic role in this reaction. The chain is tRNA N6-adenosine threonylcarbamoyltransferase from Klebsiella pneumoniae (strain 342).